A 352-amino-acid polypeptide reads, in one-letter code: Selenide, water dikinase (352 aa).

Residue C21 is part of the active site. ATP-binding positions include K24 and 51-53 (TND). Mg(2+) is bound at residue D54. Residues D71, D94, and 141–143 (GHS) contribute to the ATP site. Residue D94 coordinates Mg(2+). D231 lines the Mg(2+) pocket.

It belongs to the selenophosphate synthase 1 family. Class I subfamily. Homodimer. Requires Mg(2+) as cofactor.

It carries out the reaction hydrogenselenide + ATP + H2O = selenophosphate + AMP + phosphate + 2 H(+). Its function is as follows. Synthesizes selenophosphate from selenide and ATP. This is Selenide, water dikinase from Myxococcus xanthus (strain DK1622).